A 157-amino-acid polypeptide reads, in one-letter code: Isotocin-neurophysin IT 1 (157 aa).

Residues 1–20 (MFGTSVSALCLLFLLSVCTA) form the signal peptide. Cys21 and Cys26 are joined by a disulfide. The residue at position 29 (Gly29) is a Glycine amide. 7 disulfides stabilise this stretch: Cys42/Cys86, Cys45/Cys59, Cys53/Cys76, Cys60/Cys66, Cys93/Cys106, Cys100/Cys118, and Cys107/Cys112.

The protein belongs to the vasopressin/oxytocin family. In terms of processing, seven disulfide bonds are present in neurophysin.

Its subcellular location is the secreted. Isotocin causes contraction of smooth muscles. In Oncorhynchus keta (Chum salmon), this protein is Isotocin-neurophysin IT 1.